The primary structure comprises 306 residues: Lipoyl synthase (306 aa).

Cys-52, Cys-57, Cys-63, Cys-78, Cys-82, Cys-85, and Ser-289 together coordinate [4Fe-4S] cluster. Positions 64 to 278 constitute a Radical SAM core domain; that stretch reads WNRKTATYML…KETAYKIGFK (215 aa).

The protein belongs to the radical SAM superfamily. Lipoyl synthase family. [4Fe-4S] cluster serves as cofactor.

Its subcellular location is the cytoplasm. The enzyme catalyses [[Fe-S] cluster scaffold protein carrying a second [4Fe-4S](2+) cluster] + N(6)-octanoyl-L-lysyl-[protein] + 2 oxidized [2Fe-2S]-[ferredoxin] + 2 S-adenosyl-L-methionine + 4 H(+) = [[Fe-S] cluster scaffold protein] + N(6)-[(R)-dihydrolipoyl]-L-lysyl-[protein] + 4 Fe(3+) + 2 hydrogen sulfide + 2 5'-deoxyadenosine + 2 L-methionine + 2 reduced [2Fe-2S]-[ferredoxin]. The protein operates within protein modification; protein lipoylation via endogenous pathway; protein N(6)-(lipoyl)lysine from octanoyl-[acyl-carrier-protein]: step 2/2. Catalyzes the radical-mediated insertion of two sulfur atoms into the C-6 and C-8 positions of the octanoyl moiety bound to the lipoyl domains of lipoate-dependent enzymes, thereby converting the octanoylated domains into lipoylated derivatives. The protein is Lipoyl synthase of Leptospira biflexa serovar Patoc (strain Patoc 1 / Ames).